The following is a 439-amino-acid chain: Lipoyl synthase, mitochondrial (439 aa).

The N-terminal 37 residues, 1–37, are a transit peptide targeting the mitochondrion; it reads MVASARGLRTLHSAHSSISALPASTVPRLQLAVSRCY. Positions 150, 155, 161, 181, 185, 188, and 396 each coordinate [4Fe-4S] cluster. Residues 164–385 form the Radical SAM core domain; it reads GSSKSAATAT…KERALEMGFL (222 aa).

This sequence belongs to the radical SAM superfamily. Lipoyl synthase family. Requires [4Fe-4S] cluster as cofactor.

It is found in the mitochondrion. The enzyme catalyses [[Fe-S] cluster scaffold protein carrying a second [4Fe-4S](2+) cluster] + N(6)-octanoyl-L-lysyl-[protein] + 2 oxidized [2Fe-2S]-[ferredoxin] + 2 S-adenosyl-L-methionine + 4 H(+) = [[Fe-S] cluster scaffold protein] + N(6)-[(R)-dihydrolipoyl]-L-lysyl-[protein] + 4 Fe(3+) + 2 hydrogen sulfide + 2 5'-deoxyadenosine + 2 L-methionine + 2 reduced [2Fe-2S]-[ferredoxin]. It functions in the pathway protein modification; protein lipoylation via endogenous pathway; protein N(6)-(lipoyl)lysine from octanoyl-[acyl-carrier-protein]: step 2/2. Functionally, catalyzes the radical-mediated insertion of two sulfur atoms into the C-6 and C-8 positions of the octanoyl moiety bound to the lipoyl domains of lipoate-dependent enzymes, thereby converting the octanoylated domains into lipoylated derivatives. The chain is Lipoyl synthase, mitochondrial from Paracoccidioides lutzii (strain ATCC MYA-826 / Pb01) (Paracoccidioides brasiliensis).